Consider the following 200-residue polypeptide: NADH-quinone oxidoreductase subunit C (200 aa).

This sequence belongs to the complex I 30 kDa subunit family. In terms of assembly, NDH-1 is composed of 14 different subunits. Subunits NuoB, C, D, E, F, and G constitute the peripheral sector of the complex.

It localises to the cell inner membrane. The enzyme catalyses a quinone + NADH + 5 H(+)(in) = a quinol + NAD(+) + 4 H(+)(out). Functionally, NDH-1 shuttles electrons from NADH, via FMN and iron-sulfur (Fe-S) centers, to quinones in the respiratory chain. The immediate electron acceptor for the enzyme in this species is believed to be ubiquinone. Couples the redox reaction to proton translocation (for every two electrons transferred, four hydrogen ions are translocated across the cytoplasmic membrane), and thus conserves the redox energy in a proton gradient. In Maricaulis maris (strain MCS10) (Caulobacter maris), this protein is NADH-quinone oxidoreductase subunit C.